The chain runs to 367 residues: MVSEMTPTRRALAAVLGGRVDYVPPANPLAQTTTELMAICNASWPKAHFDSKMMADLAAASYEVCGIEAARPQFDISLEAEVLGCKLDWDKPDRPPVTGPAYTNPEDVTWPDKLEETGRIPVVLGAIDELRKRYDGMLPIIPLLTAPFTVAGHIAGVENMARWTKTDPEKAHAFIDAATDFVVAYGKLQAAYGAHILFLADPSASSSLISAETYREFVLPAHRRLAKEISCPQILHICGDSSKLLPYIKQSGIDCFSFDTVPVWYCRQVIGNDMSILGSLDVIDLMPNGTPEQVYNRTRECILQGTDIVGTACGVSYGTPLENLRAYVRACKETPIPRYDDVEDLIRQIGVGIGRNMKENVLGGMQE.

His-236, Cys-238, and Cys-313 together coordinate Zn(2+).

Belongs to the uroporphyrinogen decarboxylase family. Homodimer. Zn(2+) is required as a cofactor.

It catalyses the reaction methanethiol + coenzyme M = methyl-coenzyme M + hydrogen sulfide + H(+). In terms of biological role, methyltransferase involved in methanogenesis from methylated-thiols. Catalyzes two successive steps: mediates the transfer of a methyl group from the substrate to the cobalt cofactor of a methylated-thiol-specific corrinoid protein (MtsB), and the subsequent transfer of the methyl group from the corrinoid protein to coenzyme M. The sequence is that of Methylated-thiol--coenzyme M methyltransferase (mtsA) from Methanosarcina mazei (strain ATCC BAA-159 / DSM 3647 / Goe1 / Go1 / JCM 11833 / OCM 88) (Methanosarcina frisia).